Reading from the N-terminus, the 790-residue chain is Tumor necrosis factor alpha-induced protein 3 (790 aa).

An N-acetylalanine modification is found at A2. The interval 58–300 (PQFREIIHKA…LTDPENEMKE (243 aa)) is TRAF-binding. The OTU domain maps to 92–263 (LVALKTNGDG…SHHFVPLVTL (172 aa)). The active site involves D100. Catalysis depends on C103, which acts as the Nucleophile. Interaction with ubiquitin regions lie at residues 157–159 (LCY), 190–192 (SLE), and 224–227 (FAPL). Catalysis depends on H256, which acts as the Proton acceptor. A compositionally biased stretch (basic and acidic residues) spans 357 to 368 (QENSEQGRREGH). The interval 357 to 377 (QENSEQGRREGHAQNPMEPSV) is disordered. Positions 369–775 (AQNPMEPSVP…ACDHFGNAKC (407 aa)) are interaction with TNIP1. The segment at 381-416 (SLMDVKCETPNCPFFMSVNTQPLCHECSERRQKNQN) adopts an A20-type 1 zinc-finger fold. The interaction with RIPK1 stretch occupies residues 386–453 (KCETPNCPFF…EPLAWNPEES (68 aa)). Positions 387, 392, 404, and 407 each coordinate Zn(2+). Disordered regions lie at residues 415–434 (QNKL…PGMA) and 447–468 (AWNP…PSPF). S459 bears the Phosphoserine mark. A20-type zinc fingers lie at residues 472–507 (ETTA…LHAS) and 515–548 (HLDP…AEAS). Positions 478, 483, 495, 498, 521, 524, 536, and 539 each coordinate Zn(2+). Residues 550-583 (SLSTSLPPSCHQRSKSDPSRLVRSPSPHSCHRAG) form a disordered region. Position 575 is a phosphoserine (S575). The segment at 601 to 636 (RTGTSKCRKAGCVYFGTPENKGFCTLCFIEYRENKH) adopts an A20-type 4 zinc-finger fold. The interval 605–655 (SKCRKAGCVYFGTPENKGFCTLCFIEYRENKHFAAASGKVSPTASRFQNTI) is required for proteasomal degradation of UBE2N and UBE2D3, TRAF6 deubiquitination, and TAX1BP1 interaction with UBE2N. Residues 606–790 (KCRKAGCVYF…ECFQFKQMYG (185 aa)) form a sufficient for inhibitory activity of TNF-induced NF-kappa-B activity region. Positions 607, 612, 624, and 627 each coordinate Zn(2+). Phosphoserine is present on S645. The segment at 651-686 (FQNTIPCLGRECGTLGSTMFEGYCQKCFIEAQNQRF) adopts an A20-type 5 zinc-finger fold. Positions 657, 662, 674, and 677 each coordinate Zn(2+). A compositionally biased stretch (basic and acidic residues) spans 689–705 (AKRTEEQLRSSQRRDVP). The segment at 689–712 (AKRTEEQLRSSQRRDVPRTTQSTS) is disordered. The segment at 697–790 (RSSQRRDVPR…ECFQFKQMYG (94 aa)) is required for lysosomal localization and for TRAF2 lysosomal degradation. A20-type zinc fingers lie at residues 710 to 745 (STSR…RMGP) and 756 to 790 (DPPK…QMYG). Zn(2+) is bound by residues C716, C721, C733, C736, C762, C767, C779, and C782.

The protein belongs to the peptidase C64 family. Homodimer. Interacts with TNIP1, TAX1BP1 and TRAF2. Interacts with RNF11, ITCH and TAX1BP1 only after TNF stimulation; these interaction are transient and they are lost after 1 hour of stimulation with TNF. Interacts with YWHAZ and YWHAH. Interacts with IKBKG; the interaction is induced by TNF stimulation and by polyubiquitin. Interacts with RIPK1. Interacts with UBE2N; the interaction requires TAX1BP1. Interacts with TRAF6; the interaction is inhibited by HTLV-1 protein Tax. Post-translationally, proteolytically cleaved by MALT1 upon TCR stimulation; disrupts NF-kappa-B inhibitory function and results in increased IL-2 production. It is proposed that only a fraction of TNFAIP3 colocalized with TCR and CBM complex is cleaved, leaving the main TNFAIP3 pool intact.

Its subcellular location is the cytoplasm. The protein resides in the nucleus. The protein localises to the lysosome. The catalysed reaction is Thiol-dependent hydrolysis of ester, thioester, amide, peptide and isopeptide bonds formed by the C-terminal Gly of ubiquitin (a 76-residue protein attached to proteins as an intracellular targeting signal).. Ubiquitin-editing enzyme that contains both ubiquitin ligase and deubiquitinase activities. Involved in immune and inflammatory responses signaled by cytokines, such as TNF-alpha and IL-1 beta, or pathogens via Toll-like receptors (TLRs) through terminating NF-kappa-B activity. Essential component of a ubiquitin-editing protein complex, comprising also RNF11, ITCH and TAX1BP1, that ensures the transient nature of inflammatory signaling pathways. In cooperation with TAX1BP1 promotes disassembly of E2-E3 ubiquitin protein ligase complexes in IL-1R and TNFR-1 pathways; affected are at least E3 ligases TRAF6, TRAF2 and BIRC2, and E2 ubiquitin-conjugating enzymes UBE2N and UBE2D3. In cooperation with TAX1BP1 promotes ubiquitination of UBE2N and proteasomal degradation of UBE2N and UBE2D3. Upon TNF stimulation, deubiquitinates 'Lys-63'-polyubiquitin chains on RIPK1 and catalyzes the formation of 'Lys-48'-polyubiquitin chains. This leads to RIPK1 proteasomal degradation and consequently termination of the TNF- or LPS-mediated activation of NF-kappa-B. Deubiquitinates TRAF6 probably acting on 'Lys-63'-linked polyubiquitin. Upon T-cell receptor (TCR)-mediated T-cell activation, deubiquitinates 'Lys-63'-polyubiquitin chains on MALT1 thereby mediating disassociation of the CBM (CARD11:BCL10:MALT1) and IKK complexes and preventing sustained IKK activation. Deubiquitinates NEMO/IKBKG; the function is facilitated by TNIP1 and leads to inhibition of NF-kappa-B activation. Upon stimulation by bacterial peptidoglycans, probably deubiquitinates RIPK2. Can also inhibit I-kappa-B-kinase (IKK) through a non-catalytic mechanism which involves polyubiquitin; polyubiquitin promotes association with IKBKG and prevents IKK MAP3K7-mediated phosphorylation. Targets TRAF2 for lysosomal degradation. In vitro able to deubiquitinate 'Lys-11'-, 'Lys-48'- and 'Lys-63' polyubiquitin chains. Inhibitor of programmed cell death. Has a role in the function of the lymphoid system. Required for LPS-induced production of pro-inflammatory cytokines and IFN beta in LPS-tolerized macrophages. The protein is Tumor necrosis factor alpha-induced protein 3 (TNFAIP3) of Homo sapiens (Human).